The sequence spans 233 residues: Lipoprotein-releasing system ATP-binding protein LolD (233 aa).

Positions 6–233 (LQCDNLCKRY…TAELSLMGAE (228 aa)) constitute an ABC transporter domain. Residue 42 to 49 (GSSGSGKS) coordinates ATP.

The protein belongs to the ABC transporter superfamily. Lipoprotein translocase (TC 3.A.1.125) family. As to quaternary structure, the complex is composed of two ATP-binding proteins (LolD) and two transmembrane proteins (LolC and LolE).

It is found in the cell inner membrane. In terms of biological role, part of the ABC transporter complex LolCDE involved in the translocation of mature outer membrane-directed lipoproteins, from the inner membrane to the periplasmic chaperone, LolA. Responsible for the formation of the LolA-lipoprotein complex in an ATP-dependent manner. This Salmonella paratyphi A (strain ATCC 9150 / SARB42) protein is Lipoprotein-releasing system ATP-binding protein LolD.